A 618-amino-acid polypeptide reads, in one-letter code: Probable N-acetylgalactosaminyltransferase 6 (618 aa).

The Cytoplasmic portion of the chain corresponds to 1 to 16 (MIASLIRSRRRSRRCV). Residues 17–39 (VYSVFLFGFLALWGSFALALVFL) form a helical; Signal-anchor for type II membrane protein membrane-spanning segment. Residues 40–618 (SDMYIGEDQI…TEMSWLPEHP (579 aa)) lie on the Lumenal side of the membrane. Residues N81 and N149 are each glycosylated (N-linked (GlcNAc...) asparagine). Cystine bridges form between C147/C381 and C372/C452. Residues 156-267 (LPTTSVIIVY…KGWLEPLLTR (112 aa)) form a catalytic subdomain A region. Substrate-binding residues include D197 and R228. D251 contacts Mn(2+). S252 serves as a coordination point for substrate. Residue H253 participates in Mn(2+) binding. The segment at 327–389 (PIESPTMAGG…PCSHVGHVFR (63 aa)) is catalytic subdomain B. W358 is a substrate binding site. H386 provides a ligand contact to Mn(2+). A substrate-binding site is contributed by R389. The region spanning 474–609 (RFGRMTSSSN…SNDRQNWTIT (136 aa)) is the Ricin B-type lectin domain. N483 carries an N-linked (GlcNAc...) asparagine glycan. 3 disulfides stabilise this stretch: C487–C505, C530–C550, and C575–C597. The N-linked (GlcNAc...) asparagine glycan is linked to N605.

The protein belongs to the glycosyltransferase 2 family. GalNAc-T subfamily. The cofactor is Mn(2+).

The protein localises to the golgi apparatus membrane. It functions in the pathway protein modification; protein glycosylation. Probable glycopeptide transferase involved in O-linked oligosaccharide biosynthesis. Glycopeptide transferases catalyze the transfer of an N-acetyl-D-galactosamine residue to an already glycosylated peptide. In contrast to other members of the family, it does not act as a peptide transferase that transfers GalNAc onto serine or threonine residue on peptides that have been tested. Some peptide transferase activity is however not excluded, considering that its appropriate peptide substrate may remain unidentified. This chain is Probable N-acetylgalactosaminyltransferase 6 (gly-6), found in Caenorhabditis elegans.